The following is a 69-amino-acid chain: DNA gyrase inhibitor YacG (69 aa).

Zn(2+) is bound by residues Cys-13, Cys-16, Cys-32, and Cys-36.

Belongs to the DNA gyrase inhibitor YacG family. Interacts with GyrB. The cofactor is Zn(2+).

Its function is as follows. Inhibits all the catalytic activities of DNA gyrase by preventing its interaction with DNA. Acts by binding directly to the C-terminal domain of GyrB, which probably disrupts DNA binding by the gyrase. The protein is DNA gyrase inhibitor YacG of Neisseria meningitidis serogroup A / serotype 4A (strain DSM 15465 / Z2491).